The primary structure comprises 124 residues: Probable cytochrome b5 1 (124 aa).

Positions 3–79 (VKYFEPEEIV…LEEMYIGDLK (77 aa)) constitute a Cytochrome b5 heme-binding domain. Heme-binding residues include histidine 38 and histidine 62. Residues 100-120 (PPLPLLIALIVLPAIAVIVFV) form a helical membrane-spanning segment.

This sequence belongs to the cytochrome b5 family.

The protein resides in the endoplasmic reticulum membrane. Its subcellular location is the microsome membrane. Functionally, membrane bound hemoprotein which function as an electron carrier for several membrane bound oxygenases. This is Probable cytochrome b5 1 from Schizosaccharomyces pombe (strain 972 / ATCC 24843) (Fission yeast).